The primary structure comprises 525 residues: GMP synthase [glutamine-hydrolyzing] (525 aa).

One can recognise a Glutamine amidotransferase type-1 domain in the interval 12 to 206 (RILIIDFGSQ…THGICGCGGD (195 aa)). The active-site Nucleophile is C90. Residues H180 and E182 contribute to the active site. The 193-residue stretch at 207-399 (WTMAAFKDQA…LGLPDEMVGR (193 aa)) folds into the GMPS ATP-PPase domain. Position 234-240 (234-240 (SGGVDSS)) interacts with ATP.

In terms of assembly, homodimer.

It catalyses the reaction XMP + L-glutamine + ATP + H2O = GMP + L-glutamate + AMP + diphosphate + 2 H(+). It participates in purine metabolism; GMP biosynthesis; GMP from XMP (L-Gln route): step 1/1. Catalyzes the synthesis of GMP from XMP. The sequence is that of GMP synthase [glutamine-hydrolyzing] from Rhodospirillum rubrum (strain ATCC 11170 / ATH 1.1.1 / DSM 467 / LMG 4362 / NCIMB 8255 / S1).